The following is a 385-amino-acid chain: MKTELDLHDRSLTLHRFPKRSNETLQAWDAGDEYLINNVEGMALPDNQNIVVVNDNFGALACWFSDRHNVTLMSDSFISHKGAQQNLADNQCNQVSFLSTMDDIPENTDLVLMQLPKSNRHLVWLLSQLRKTLPASCPIVAVNKAKEIHTSTLKLFEKYLGETKTSLAWKKHRLVFSTANAQPVIDVDPMTIWGIEGEGIQLKNLPNVYSGESLDLGARFMLQHLPQDPTLKHVIDLGCGNGLLSVKMGQLNPQARLTSVDESFMAVESAKQNLLDNLGDARDIQCIANNCLDGFTPDCADMVMCNPPFHQQQAITDHIAWQMFCDAKQILNQGGKLLVIGNRHLGYDAKLKRLFGDKNVKLVASNNKFVILQATKNPAKLGAKQ.

Belongs to the methyltransferase superfamily. RlmG family.

It localises to the cytoplasm. It catalyses the reaction guanosine(1835) in 23S rRNA + S-adenosyl-L-methionine = N(2)-methylguanosine(1835) in 23S rRNA + S-adenosyl-L-homocysteine + H(+). Functionally, specifically methylates the guanine in position 1835 (m2G1835) of 23S rRNA. The polypeptide is Ribosomal RNA large subunit methyltransferase G (Vibrio campbellii (strain ATCC BAA-1116)).